Reading from the N-terminus, the 197-residue chain is Probable UbiX-like flavin prenyltransferase (197 aa).

Residues 9–11 (GAT), serine 36, 87–90 (SMKT), and arginine 122 contribute to the FMN site.

Belongs to the UbiX/PAD1 family. YclB subfamily. In terms of assembly, homododecamer.

The catalysed reaction is dimethylallyl phosphate + FMNH2 = prenylated FMNH2 + phosphate. Involved in the non-oxidative decarboxylation and detoxification of phenolic derivatives under both aerobic and anaerobic conditions. Flavin prenyltransferase that catalyzes the synthesis of the prenylated FMN cofactor (prenyl-FMN) for phenolic acid decarboxylase. This chain is Probable UbiX-like flavin prenyltransferase, found in Escherichia coli O157:H7.